We begin with the raw amino-acid sequence, 301 residues long: Small ribosomal subunit protein uS2 (301 aa).

It belongs to the universal ribosomal protein uS2 family.

This chain is Small ribosomal subunit protein uS2, found in Acidobacterium capsulatum (strain ATCC 51196 / DSM 11244 / BCRC 80197 / JCM 7670 / NBRC 15755 / NCIMB 13165 / 161).